The following is a 262-amino-acid chain: Indole-3-glycerol phosphate synthase (262 aa).

It belongs to the TrpC family.

It carries out the reaction 1-(2-carboxyphenylamino)-1-deoxy-D-ribulose 5-phosphate + H(+) = (1S,2R)-1-C-(indol-3-yl)glycerol 3-phosphate + CO2 + H2O. Its pathway is amino-acid biosynthesis; L-tryptophan biosynthesis; L-tryptophan from chorismate: step 4/5. The polypeptide is Indole-3-glycerol phosphate synthase (Clostridium acetobutylicum (strain ATCC 824 / DSM 792 / JCM 1419 / IAM 19013 / LMG 5710 / NBRC 13948 / NRRL B-527 / VKM B-1787 / 2291 / W)).